The following is a 450-amino-acid chain: Isoleucine 2-epimerase (450 aa).

Residues 115-116 (GS), tyrosine 142, and 250-253 (DEVN) contribute to the pyridoxal 5'-phosphate site. At lysine 280 the chain carries N6-(pyridoxal phosphate)lysine. Threonine 309 lines the pyridoxal 5'-phosphate pocket.

Belongs to the class-III pyridoxal-phosphate-dependent aminotransferase family. As to quaternary structure, homotetramer. It depends on pyridoxal 5'-phosphate as a cofactor.

It catalyses the reaction L-isoleucine = D-allo-isoleucine. Its function is as follows. Catalyzes the epimerization of L-isoleucine to D-allo-isoleucine and D-allo-isoleucine to L-isoleucine. Can also catalyze the racemization of many nonpolar amino acids, including leucine and valine. Does not have GABA aminotransferase activity. This Lentilactobacillus buchneri (Lactobacillus buchneri) protein is Isoleucine 2-epimerase.